We begin with the raw amino-acid sequence, 2602 residues long: MPVTEKDLAEDAPWKKIQQNTFTRWCNEHLKCVNKRIGNLQTDLSDGLRLIALLEVLSQKRMYRKYHQRPTFRQMQLENVSVALEFLDRESIKLVSIDSKAIVDGNLKLILGLVWTLILHYSISMPVWEDEGDDDAKKQTPKQRLLGWIQNKIPYLPITNFNQNWQDGKALGALVDSCAPGLCPDWESWDPQKPVDNAREAMQQADDWLGVPQVITPEEIIHPDVDEHSVMTYLSQFPKAKLKPGAPLKPKLNPKKARAYGRGIEPTGNMVKQPAKFTVDTISAGQGDVMVFVEDPEGNKEEAQVTPDSDKNKTYSVEYLPKVTGLHKVTVLFAGQHISKSPFEVSVDKAQGDASKVTAKGPGLEAVGNIANKPTYFDIYTAGAGVGDIGVEVEDPQGKNTVELLVEDKGNQVYRCVYKPMQPGPHVVKIFFAGDTIPKSPFVVQVGEACNPNACRASGRGLQPKGVRIRETTDFKVDTKAAGSGELGVTMKGPKGLEELVKQKDFLDGVYAFEYYPSTPGRYSIAITWGGHHIPKSPFEVQVGPEAGMQKVRAWGPGLHGGIVGRSADFVVESIGSEVGSLGFAIEGPSQAKIEYNDQNDGSCDVKYWPKEPGEYAVHIMCDDEDIKDSPYMAFIHPATGGYNPDLVRAYGPGLEKSGCIVNNLAEFTVDPKDAGKAPLKIFAQDGEGQRIDIQMKNRMDGTYACSYTPVKAIKHTIAVVWGGVNIPHSPYRVNIGQGSHPQKVKVFGPGVERSGLKANEPTHFTVDCTEAGEGDVSVGIKCDARVLSEDEEDVDFDIIHNANDTFTVKYVPPAAGRYTIKVLFASQEIPASPFRVKVDPSHDASKVKAEGPGLSKAGVENGKPTHFTVYTKGAGKAPLNVQFNSPLPGDAVKDLDIIDNYDYSHTVKYTPTQQGNMQVLVTYGGDPIPKSPFTVGVAAPLDLSKIKLNGLENRVEVGKDQEFTVDTRGAGGQGKLDVTILSPSRKVVPCLVTPVTGRENSTAKFIPREEGLYAVDVTYDGHPVPGSPYTVEASLPPDPSKVKAHGPGLEGGLVGKPAEFTIDTKGAGTGGLGLTVEGPCEAKIECSDNGDGTCSVSYLPTKPGEYFVNILFEEVHIPGSPFKADIEMPFDPSKVVASGPGLEHGKVGEAGLLSVDCSEAGPGALGLEAVSDSGTKAEVSIQNNKDGTYAVTYVPLTAGMYTLTMKYGGELVPHFPARVKVEPAVDTSRIKVFGPGIEGKDVFREATTDFTVDSRPLTQVGGDHIKAHIANPSGASTECFVTDNADGTYQVEYTPFEKGLHVVEVTYDDVPIPNSPFKVAVTEGCQPSRVQAQGPGLKEAFTNKPNVFTVVTRGAGIGGLGITVEGPSESKINCRDNKDGSCSAEYIPFAPGDYDVNITYGGAHIPGSPFRVPVKDVVDPSKVKIAGPGLGSGVRARVLQSFTVDSSKAGLAPLEVRVLGPRGLVEPVNVVDNGDGTHTVTYTPSQEGPYMVSVKYADEEIPRSPFKVKVLPTYDASKVTASGPGLSSYGVPASLPVDFAIDARDAGEGLLAVQITDQEGKPKRAIVHDNKDGTYAVTYIPDKTGRYMIGVTYGGDDIPLSPYRIRATQTGDASKCLATGPGIASTVKTGEEVGFVVDAKTAGKGKVTCTVLTPDGTEAEADVIENEDGTYDIFYTAAKPGTYVIYVRFGGVDIPNSPFTVMATDGEVTAVEEAPVNACPPGFRPWVTEEAYVPVSDMNGLGFKPFDLVIPFAVRKGEITGEVHMPSGKTATPEIVDNKDGTVTVRYAPTEVGLHEMHIKYMGSHIPESPLQFYVNYPNSGSVSAYGPGLVYGVANKTATFTIVTEDAGEGGLDLAIEGPSKAEISCIDNKDGTCTVTYLPTLPGDYSILVKYNDKHIPGSPFTAKITDDSRRCSQVKLGSAADFLLDISETDLSSLTASIKAPSGRDEPCLLKRLPNNHIGISFIPREVGEHLVSIKKNGNHVANSPVSIMVVQSEIGDARRAKVYGRGLSEGRTFEMSDFIVDTRDAGYGGISLAVEGPSKVDIQTEDLEDGTCKVSYFPTVPGVYIVSTKFADEHVPGSPFTVKISGEGRVKESITRTSRAPSVATVGSICDLNLKIPEINSSDMSAHVTSPSGRVTEAEIVPMGKNSHCVRFVPQEMGVHTVSVKYRGQHVTGSPFQFTVGPLGEGGAHKVRAGGPGLERGEAGVPAEFSIWTREAGAGGLSIAVEGPSKAEITFDDHKNGSCGVSYIAQEPGNYEVSIKFNDEHIPESPYLVPVIAPSDDARRLTVMSLQESGLKVNQPASFAIRLNGAKGKIDAKVHSPSGAVEECHVSELEPDKYAVRFIPHENGVHTIDVKFNGSHVVGSPFKVRVGEPGQAGNPALVSAYGTGLEGGTTGIQSEFFINTTRAGPGTLSVTIEGPSKVKMDCQETPEGYKVMYTPMAPGNYLISVKYGGPNHIVGSPFKAKVTGQRLVSPGSANETSSILVESVTRSSTETCYSAIPKASSDASKVTSKGAGLSKAFVGQKSSFLVDCSKAGSNMLLIGVHGPTTPCEEVSMKHVGNQQYNVTYVVKERGDYVLAVKWGEEHIPGSPFHVTVP.

The interval 1–239 is actin-binding; that stretch reads MPVTEKDLAE…VMTYLSQFPK (239 aa). Calponin-homology (CH) domains follow at residues 16 to 122 and 139 to 242; these read KIQQ…LHYS and QTPK…KAKL. Thr216 bears the Phosphothreonine mark. A disordered region spans residues 244 to 267; the sequence is PGAPLKPKLNPKKARAYGRGIEPT. 15 Filamin repeats span residues 249–347, 349–446, 447–543, 544–636, 640–736, 737–839, 840–938, 939–1034, 1035–1127, 1128–1222, 1223–1322, 1323–1415, 1416–1511, 1512–1608, and 1609–1704; these read KPKL…EVSV, KAQG…VVQV, GEAC…EVQV, GPEA…MAFI, TGGY…RVNI, GQGS…RVKV, DPSH…TVGV, AAPL…TVEA, SLPP…KADI, EMPF…RVKV, EPAV…KVAV, TEGC…RVPV, KDVV…KVKV, LPTY…RIRA, and TQTG…TVMA. Residue Thr519 is modified to Phosphothreonine. Lys681 is subject to N6-acetyllysine. Ser730 bears the Phosphoserine mark. Phosphoserine occurs at positions 886, 932, 983, and 1028. The tract at residues 1128-1511 is interaction with FBLP1; it reads EMPFDPSKVV…IPRSPFKVKV (384 aa). Phosphothreonine is present on Thr1307. Ser1316 is subject to Phosphoserine. Phosphoserine is present on residues Ser1433, Asn1474, Ser1505, and Ser1602. Positions 1705–1728 are hinge 1; the sequence is TDGEVTAVEEAPVNACPPGFRPWV. Filamin repeat units lie at residues 1729 to 1813, 1816 to 1908, 1919 to 1994, 1997 to 2089, 2091 to 2185, 2188 to 2280, 2282 to 2375, and 2379 to 2471; these read TEEA…SPLQ, VNYP…TAKI, KLGS…SIMV, SEIG…TVKI, GEGR…QFTV, LGEG…LVPV, APSD…KVRV, and GQAG…KAKV. Lys1780 carries the N6-acetyllysine modification. The interaction with the cytoplasmic tail of GP1BA stretch occupies residues 1862–2148; it reads SKAEISCIDN…RVTEAEIVPM (287 aa). The interval 2060-2225 is interaction with FLNA 1; it reads SYFPTVPGVY…IWTREAGAGG (166 aa). 3 positions are modified to phosphoserine: Ser2083, Ser2107, and Ser2113. An interaction with INPPL1 region spans residues 2130–2602; that stretch reads SAHVTSPSGR…PGSPFHVTVP (473 aa). A phosphoserine mark is found at Ser2369 and Ser2465. Lys2468 participates in a covalent cross-link: Glycyl lysine isopeptide (Lys-Gly) (interchain with G-Cter in ISG15). The segment at 2472–2506 is hinge 2; that stretch reads TGQRLVSPGSANETSSILVESVTRSSTETCYSAIP. Residues 2472–2602 are self-association site, tail; that stretch reads TGQRLVSPGS…PGSPFHVTVP (131 aa). Phosphoserine occurs at positions 2478, 2481, and 2492. One copy of the Filamin 24 repeat lies at 2507-2601; the sequence is KASSDASKVT…IPGSPFHVTV (95 aa). The tract at residues 2507-2602 is interaction with FLNA 2; it reads KASSDASKVT…PGSPFHVTVP (96 aa). N6-succinyllysine occurs at positions 2518 and 2524. Lys2576 is subject to N6-acetyllysine.

This sequence belongs to the filamin family. In terms of assembly, homodimer. Interacts with MICALL2. Interacts with RFLNA and RFLNB. Isoform 1 interacts with FBLP1, FLNA, FLNC, GP1BA, INPPL1, ITGB1A, PSEN1 and PSEN2. Isoform 3 interacts with ITGB1A, ITGB1D, ITGB3 and ITGB6. Interacts with MYOT and MYOZ1. Interacts with HBV capsid protein. Interacts with ASB2 isoform 1; the interaction targets FLNB for proteasomal degradation. ISGylation prevents ability to interact with the upstream activators of the JNK cascade and inhibits IFNA-induced JNK signaling. In terms of processing, ubiquitination by a SCF-like complex containing ASB2 isoform 1 leads to proteasomal degradation which promotes muscle differentiation. In terms of tissue distribution, ubiquitous. Isoform 1 and isoform 2 are expressed in placenta, bone marrow, brain, umbilical vein endothelial cells (HUVEC), retina and skeletal muscle. Isoform 1 is predominantly expressed in prostate, uterus, liver, thyroid, stomach, lymph node, small intestine, spleen, skeletal muscle, kidney, placenta, pancreas, heart, lung, platelets, endothelial cells, megakaryocytic and erythroleukemic cell lines. Isoform 2 is predominantly expressed in spinal cord, platelet and Daudi cells. Also expressed in thyroid adenoma, neurofibrillary tangles (NFT), senile plaques in the hippocampus and cerebral cortex in Alzheimer disease (AD). Isoform 3 and isoform 6 are expressed predominantly in lung, heart, skeletal muscle, testis, spleen, thymus and leukocytes. Isoform 4 and isoform 5 are expressed in heart.

It is found in the cytoplasm. It localises to the cell cortex. Its subcellular location is the cytoskeleton. The protein resides in the stress fiber. The protein localises to the myofibril. It is found in the sarcomere. It localises to the z line. Connects cell membrane constituents to the actin cytoskeleton. May promote orthogonal branching of actin filaments and links actin filaments to membrane glycoproteins. Anchors various transmembrane proteins to the actin cytoskeleton. Interaction with FLNA may allow neuroblast migration from the ventricular zone into the cortical plate. Various interactions and localizations of isoforms affect myotube morphology and myogenesis. Isoform 6 accelerates muscle differentiation in vitro. The protein is Filamin-B (FLNB) of Homo sapiens (Human).